Consider the following 951-residue polypeptide: Valine--tRNA ligase (951 aa).

The 'HIGH' region motif lies at P42–H52. Residues K554–S558 carry the 'KMSKS' region motif. Position 557 (K557) interacts with ATP. A coiled-coil region spans residues A880–Q944.

Belongs to the class-I aminoacyl-tRNA synthetase family. ValS type 1 subfamily. Monomer.

Its subcellular location is the cytoplasm. The enzyme catalyses tRNA(Val) + L-valine + ATP = L-valyl-tRNA(Val) + AMP + diphosphate. Functionally, catalyzes the attachment of valine to tRNA(Val). As ValRS can inadvertently accommodate and process structurally similar amino acids such as threonine, to avoid such errors, it has a 'posttransfer' editing activity that hydrolyzes mischarged Thr-tRNA(Val) in a tRNA-dependent manner. This Shigella flexneri protein is Valine--tRNA ligase.